A 1233-amino-acid polypeptide reads, in one-letter code: ATP-dependent helicase/nuclease subunit A (1233 aa).

In terms of domain architecture, UvrD-like helicase ATP-binding spans 3–474 (TKWTEEQKQA…ILLYKNFRSR (472 aa)). Residue 24–31 (AAAGSGKT) participates in ATP binding. In terms of domain architecture, UvrD-like helicase C-terminal spans 518–809 (VTGGAVELHL…RIMSIHKSKG (292 aa)). The segment at 533–555 (VEEEVEEKEEEKNEEKDFEEEEE) is disordered.

Belongs to the helicase family. AddA subfamily. As to quaternary structure, heterodimer of AddA and AddB/RexB. The cofactor is Mg(2+).

It catalyses the reaction Couples ATP hydrolysis with the unwinding of duplex DNA by translocating in the 3'-5' direction.. It carries out the reaction ATP + H2O = ADP + phosphate + H(+). The heterodimer acts as both an ATP-dependent DNA helicase and an ATP-dependent, dual-direction single-stranded exonuclease. Recognizes the chi site generating a DNA molecule suitable for the initiation of homologous recombination. The AddA nuclease domain is required for chi fragment generation; this subunit has the helicase and 3' -&gt; 5' nuclease activities. In Thermoanaerobacter sp. (strain X514), this protein is ATP-dependent helicase/nuclease subunit A.